The primary structure comprises 963 residues: Protein bicaudal C homolog 1-A (963 aa).

The tract at residues Met1–Arg48 is disordered. Polar residues predominate over residues Met12–Glu22. Residues Asp35–Arg48 are compositionally biased toward basic and acidic residues. KH domains lie at Arg128–Ile195 and Pro280–Leu344. Polar residues predominate over residues Glu592–Ser601. 3 disordered regions span residues Glu592–Glu613, Glu668–Ser713, and Leu767–Ala834. Basic and acidic residues-rich tracts occupy residues Ser602–Pro612 and Val683–Glu696. The segment covering Glu784–Leu797 has biased composition (low complexity). The segment covering Ile812–Gly824 has biased composition (polar residues). The 64-residue stretch at Phe862 to Asn925 folds into the SAM domain.

The protein belongs to the BicC family.

Its function is as follows. Putative RNA-binding protein. May be involved in regulating gene expression during embryonic development. Seems to be involved in endoderm formation. Ectopic expression results in endoderm formation in the absence of mesoderm induction. This chain is Protein bicaudal C homolog 1-A (bicc1-a), found in Xenopus laevis (African clawed frog).